A 93-amino-acid polypeptide reads, in one-letter code: Early nodulin-12A (93 aa).

The signal sequence occupies residues 1–24 (MASFLLSILVFFLSALVLVPQGFA). Residues 30-93 (PAYRPPQTEP…HPPSEDNIHF (64 aa)) are disordered. 10 consecutive repeat copies span residues 34–38 (PPQTE), 39–43 (PPVHK), 44–48 (PPHKE), 49–53 (PPVHK), 54–58 (PPHKD), 59–63 (PPVNK), 64–68 (PPQKE), 69–73 (PPVHK), 74–78 (PPRKE), and 79–83 (PPTHR). Residues 34–83 (PPQTEPPVHKPPHKEPPVHKPPHKDPPVNKPPQKEPPVHKPPRKEPPTHR) form a 10 X 5 AA tandem repeats of P-P-[HQVRT]-[HKNT]-[DEKR] region. Over residues 46-93 (HKEPPVHKPPHKDPPVNKPPQKEPPVHKPPRKEPPTHRHPPSEDNIHF) the composition is skewed to basic and acidic residues.

Belongs to the plant proline-rich protein superfamily. ENOD12 family. In terms of tissue distribution, more abundant in the young nodules than the mature nodules.

It is found in the secreted. Its subcellular location is the cell wall. Its function is as follows. Involved in the infection process during the plant-rhizobium interaction. This Medicago sativa (Alfalfa) protein is Early nodulin-12A (ENOD12A).